The chain runs to 141 residues: Hemoglobin subunit alpha (141 aa).

Residues 1 to 141 enclose the Globin domain; that stretch reads VLSPDDKKHV…VSTVLTSKYR (141 aa). Ser3 is modified (phosphoserine). N6-succinyllysine occurs at positions 7 and 11. Lys16 bears the N6-acetyllysine; alternate mark. At Lys16 the chain carries N6-succinyllysine; alternate. Position 24 is a phosphotyrosine (Tyr24). Position 35 is a phosphoserine (Ser35). Lys40 is modified (N6-succinyllysine). Phosphoserine is present on Ser49. An O2-binding site is contributed by His58. Position 87 (His87) interacts with heme b. Position 102 is a phosphoserine (Ser102). Thr108 carries the phosphothreonine modification. Phosphoserine is present on residues Ser124 and Ser131. A phosphothreonine mark is found at Thr134 and Thr137. Ser138 carries the post-translational modification Phosphoserine.

The protein belongs to the globin family. As to quaternary structure, heterotetramer of two alpha chains and two beta chains. Red blood cells.

Functionally, involved in oxygen transport from the lung to the various peripheral tissues. Hemopressin acts as an antagonist peptide of the cannabinoid receptor CNR1. Hemopressin-binding efficiently blocks cannabinoid receptor CNR1 and subsequent signaling. This Theropithecus gelada (Gelada baboon) protein is Hemoglobin subunit alpha (HBA).